Here is a 368-residue protein sequence, read N- to C-terminus: Methionine import ATP-binding protein MetN (368 aa).

Residues 5–260 (IELNNLSVQF…PKEALTKQFI (256 aa)) form the ABC transporter domain. Position 41–48 (41–48 (GYSGAGKS)) interacts with ATP.

The protein belongs to the ABC transporter superfamily. Methionine importer (TC 3.A.1.24) family. As to quaternary structure, the complex is composed of two ATP-binding proteins (MetN), two transmembrane proteins (MetI) and a solute-binding protein (MetQ).

It localises to the cell membrane. It catalyses the reaction L-methionine(out) + ATP + H2O = L-methionine(in) + ADP + phosphate + H(+). It carries out the reaction D-methionine(out) + ATP + H2O = D-methionine(in) + ADP + phosphate + H(+). Part of the ABC transporter complex MetNIQ involved in methionine import. Responsible for energy coupling to the transport system. The sequence is that of Methionine import ATP-binding protein MetN from Lactococcus lactis subsp. cremoris (strain SK11).